The primary structure comprises 588 residues: uncharacterized protein (588 aa).

This is an uncharacterized protein from Schizosaccharomyces pombe (strain 972 / ATCC 24843) (Fission yeast).